We begin with the raw amino-acid sequence, 317 residues long: D-alanine--D-alanine ligase (317 aa).

Positions 111–308 constitute an ATP-grasp domain; sequence KRFWNGIGIP…YASLVEKIAQ (198 aa). 137–192 provides a ligand contact to ATP; that stretch reads EEQMSYPVIVKPSREGSTIGINKAMNRAELDDALIKALEYDSDILVEEFIDGPEFT. 3 residues coordinate Mg(2+): aspartate 262, glutamate 275, and asparagine 277.

This sequence belongs to the D-alanine--D-alanine ligase family. It depends on Mg(2+) as a cofactor. Mn(2+) serves as cofactor.

It is found in the cytoplasm. The catalysed reaction is 2 D-alanine + ATP = D-alanyl-D-alanine + ADP + phosphate + H(+). Its pathway is cell wall biogenesis; peptidoglycan biosynthesis. In terms of biological role, cell wall formation. The sequence is that of D-alanine--D-alanine ligase from Marinomonas sp. (strain MWYL1).